The chain runs to 284 residues: Aliphatic sulfonates import ATP-binding protein SsuB (284 aa).

The ABC transporter domain maps to 21-242 (LRIAHAVKRY…HRGAPAFARL (222 aa)). 53-60 (GRSGCGKS) is an ATP binding site.

The protein belongs to the ABC transporter superfamily. Aliphatic sulfonates importer (TC 3.A.1.17.2) family. The complex is composed of two ATP-binding proteins (SsuB), two transmembrane proteins (SsuC) and a solute-binding protein (SsuA).

Its subcellular location is the cell inner membrane. It carries out the reaction ATP + H2O + aliphatic sulfonate-[sulfonate-binding protein]Side 1 = ADP + phosphate + aliphatic sulfonateSide 2 + [sulfonate-binding protein]Side 1.. In terms of biological role, part of the ABC transporter complex SsuABC involved in aliphatic sulfonates import. Responsible for energy coupling to the transport system. The sequence is that of Aliphatic sulfonates import ATP-binding protein SsuB from Ralstonia nicotianae (strain ATCC BAA-1114 / GMI1000) (Ralstonia solanacearum).